A 116-amino-acid chain; its full sequence is Glycine-rich protein 3 short isoform (116 aa).

Positions 1–24 are cleaved as a signal peptide; the sequence is MASKTLLLLGLFAFLFIVSEMAAA. The segment at 27 to 83 is disordered; the sequence is VKSESEETVKPEQHGGGFGDNGGGRYQGGGGHGGHGGGGYQGGGGRYQGGGGRQGGG. A compositionally biased stretch (basic and acidic residues) spans 29-39; it reads SESEETVKPEQ. Residues 40–83 show a composition bias toward gly residues; that stretch reads HGGGFGDNGGGRYQGGGGHGGHGGGGYQGGGGRYQGGGGRQGGG. 5 tandem repeats follow at residues 54–59, 62–67, 68–73, 75–80, and 81–86. The 5 X 6 AA tandem repeats of G-G-G-G-[HYRS]-[GYQ] stretch occupies residues 54 to 86; it reads GGGGHGGHGGGGYQGGGGRYQGGGGRQGGGGSY.

It belongs to the GRP family. In terms of assembly, interacts with WAK1 (via the extracellular domain). Component of a 500 kDa complex, composed of GRP3 or GRP3-S, WAK1 and KAPP.

The protein resides in the secreted. It localises to the extracellular space. The protein localises to the extracellular matrix. Its function is as follows. Regulates the function of the receptor protein kinase WAK1. The protein is Glycine-rich protein 3 short isoform (GRP3S) of Arabidopsis thaliana (Mouse-ear cress).